The following is a 423-amino-acid chain: Histidine--tRNA ligase (423 aa).

Belongs to the class-II aminoacyl-tRNA synthetase family.

Its subcellular location is the cytoplasm. The enzyme catalyses tRNA(His) + L-histidine + ATP = L-histidyl-tRNA(His) + AMP + diphosphate + H(+). In Picrophilus torridus (strain ATCC 700027 / DSM 9790 / JCM 10055 / NBRC 100828 / KAW 2/3), this protein is Histidine--tRNA ligase.